The following is a 37-amino-acid chain: Large ribosomal subunit protein bL36c (37 aa).

This sequence belongs to the bacterial ribosomal protein bL36 family.

It is found in the plastid. Its subcellular location is the chloroplast. The chain is Large ribosomal subunit protein bL36c from Pleurastrum terricola (Filamentous green alga).